The sequence spans 287 residues: Gliotoxin thiomethyltransferase GtmA (287 aa).

S-adenosyl-L-methionine is bound by residues Thr-27 and Ala-54. Cys-55 and Cys-80 form a disulfide bridge. Positions 82, 87, 109, 110, 126, and 248 each coordinate S-adenosyl-L-methionine.

Belongs to the class I-like SAM-binding methyltransferase superfamily.

The protein resides in the cytoplasm. It catalyses the reaction a thiol + S-adenosyl-L-methionine = a methyl thioether + S-adenosyl-L-homocysteine + H(+). Its function is as follows. S-methyltransferase that catalyzes the irreversible conversion of the secondary metabolite gliotoxin to bis(methylthio)gliotoxin (BmGT). Gliotoxin, a member of the epipolythiodioxopiperazine (ETP) class of toxins, is characterized by a disulfide bridged cyclic dipeptide. Its thiol groups are essential for bioactivity, as they conjugate to sulfur-containing proteins, disturb the intracellular redox equilibrium, and generate reactive oxygen species by cycling between reduced and oxidized states. The enzyme prevents self-intoxication of the fungus by irreversible conversion of the toxic gliotoxin to a biologically inactive bis-thiomethylated derivative. Appears to negatively regulate gliotoxin biosynthesis. This Aspergillus fumigatus (strain ATCC MYA-4609 / CBS 101355 / FGSC A1100 / Af293) (Neosartorya fumigata) protein is Gliotoxin thiomethyltransferase GtmA.